The chain runs to 372 residues: Carbamoyl phosphate synthase small chain (372 aa).

Residues 1-179 form a CPSase region; it reads MRAILALEDG…ALVTGKTLPP (179 aa). 3 residues coordinate L-glutamine: Ser-45, Gly-231, and Gly-233. The Glutamine amidotransferase type-1 domain occupies 183 to 369; it reads DIVAFDFGIK…RKMIAASKRQ (187 aa). The active-site Nucleophile is the Cys-258. Leu-259, Gln-262, Asn-300, Gly-302, and Phe-303 together coordinate L-glutamine. Active-site residues include His-342 and Glu-344.

Belongs to the CarA family. Composed of two chains; the small (or glutamine) chain promotes the hydrolysis of glutamine to ammonia, which is used by the large (or ammonia) chain to synthesize carbamoyl phosphate. Tetramer of heterodimers (alpha,beta)4.

The catalysed reaction is hydrogencarbonate + L-glutamine + 2 ATP + H2O = carbamoyl phosphate + L-glutamate + 2 ADP + phosphate + 2 H(+). It catalyses the reaction L-glutamine + H2O = L-glutamate + NH4(+). Its pathway is amino-acid biosynthesis; L-arginine biosynthesis; carbamoyl phosphate from bicarbonate: step 1/1. It participates in pyrimidine metabolism; UMP biosynthesis via de novo pathway; (S)-dihydroorotate from bicarbonate: step 1/3. Functionally, small subunit of the glutamine-dependent carbamoyl phosphate synthetase (CPSase). CPSase catalyzes the formation of carbamoyl phosphate from the ammonia moiety of glutamine, carbonate, and phosphate donated by ATP, constituting the first step of 2 biosynthetic pathways, one leading to arginine and/or urea and the other to pyrimidine nucleotides. The small subunit (glutamine amidotransferase) binds and cleaves glutamine to supply the large subunit with the substrate ammonia. The chain is Carbamoyl phosphate synthase small chain from Akkermansia muciniphila (strain ATCC BAA-835 / DSM 22959 / JCM 33894 / BCRC 81048 / CCUG 64013 / CIP 107961 / Muc).